Consider the following 1448-residue polypeptide: Gag-Pol polyprotein (1448 aa).

The N-myristoyl glycine; by host moiety is linked to residue Gly-2. The Nuclear export signal motif lies at Leu-16–Arg-22. Residues Lys-26–Lys-32 carry the Nuclear localization signal motif. A compositionally biased stretch (low complexity) spans His-218–Gln-227. A disordered region spans residues His-218–Ala-237. 2 CCHC-type zinc fingers span residues Ile-391–Ala-408 and Gln-412–Asn-429. Positions Leu-440–Ser-461 are disordered. Positions Val-517–Leu-586 constitute a Peptidase A2 domain. The For protease activity; shared with dimeric partner role is filled by Asp-522. The Reverse transcriptase domain occupies Asp-640–Leu-830. Mg(2+)-binding residues include Asp-706, Asp-781, and Asp-782. The tract at residues Phe-823–Trp-831 is RT 'primer grip'. Positions Trp-993–Trp-1009 match the Tryptophan repeat motif motif. Residues Ile-1029–Arg-1152 form the RNase H type-1 domain. Residues Asp-1038, Glu-1073, Asp-1093, and Asp-1144 each contribute to the Mg(2+) site. The Integrase-type zinc finger occupies Glu-1158 to His-1199. His-1167, His-1171, Cys-1195, and Cys-1198 together coordinate Zn(2+). One can recognise an Integrase catalytic domain in the interval Val-1209 to Ile-1359. Mg(2+)-binding residues include Asp-1219 and Asp-1271. Residues Phe-1378 to Asp-1425 constitute a DNA-binding region (integrase-type). Residues Tyr-1426–Ala-1448 are disordered.

Homotrimer. Interacts with gp41 (via C-terminus). In terms of assembly, homodimer. The active site consists of two apposed aspartic acid residues. As to quaternary structure, heterodimer of p66 RT and p51 RT (RT p66/p51). Heterodimerization of RT is essential for DNA polymerase activity. Despite the sequence identities, p66 RT and p51 RT have distinct folding. Homotetramer; may further associate as a homohexadecamer. It depends on Mg(2+) as a cofactor. In terms of processing, specific enzymatic cleavages by the viral protease yield mature proteins. The protease is released by autocatalytic cleavage. The polyprotein is cleaved during and after budding, this process is termed maturation. Proteolytic cleavage of p66 RT removes the RNase H domain to yield the p51 RT subunit. Post-translationally, capsid protein p24 is phosphorylated.

The protein localises to the virion. It localises to the host nucleus. The protein resides in the host cytoplasm. It is found in the host cell membrane. It catalyses the reaction Specific for a P1 residue that is hydrophobic, and P1' variable, but often Pro.. The enzyme catalyses Endohydrolysis of RNA in RNA/DNA hybrids. Three different cleavage modes: 1. sequence-specific internal cleavage of RNA. Human immunodeficiency virus type 1 and Moloney murine leukemia virus enzymes prefer to cleave the RNA strand one nucleotide away from the RNA-DNA junction. 2. RNA 5'-end directed cleavage 13-19 nucleotides from the RNA end. 3. DNA 3'-end directed cleavage 15-20 nucleotides away from the primer terminus.. The catalysed reaction is 3'-end directed exonucleolytic cleavage of viral RNA-DNA hybrid.. It carries out the reaction DNA(n) + a 2'-deoxyribonucleoside 5'-triphosphate = DNA(n+1) + diphosphate. With respect to regulation, the viral protease is inhibited by many synthetic protease inhibitors (PIs), such as amprenavir, atazanavir, indinavir, loprinavir, nelfinavir, ritonavir and saquinavir. RT can be inhibited either by nucleoside RT inhibitors (NRTIs) or by non nucleoside RT inhibitors (NNRTIs). NRTIs act as chain terminators, whereas NNRTIs inhibit DNA polymerization by binding a small hydrophobic pocket near the RT active site and inducing an allosteric change in this region. Classical NRTIs are abacavir, adefovir (PMEA), didanosine (ddI), lamivudine (3TC), stavudine (d4T), tenofovir (PMPA), zalcitabine (ddC), and zidovudine (AZT). Classical NNRTIs are atevirdine (BHAP U-87201E), delavirdine, efavirenz (DMP-266), emivirine (I-EBU), and nevirapine (BI-RG-587). The tritherapies used as a basic effective treatment of AIDS associate two NRTIs and one NNRTI. Use of protease inhibitors in tritherapy regimens permit more ambitious therapeutic strategies. Its function is as follows. Gag-Pol polyprotein and Gag polyprotein may regulate their own translation, by the binding genomic RNA in the 5'-UTR. At low concentration, Gag-Pol and Gag would promote translation, whereas at high concentration, the polyproteins encapsidate genomic RNA and then shut off translation. Functionally, matrix protein p17 has two main functions: in infected cell, it targets Gag and Gag-pol polyproteins to the plasma membrane via a multipartite membrane-binding signal, that includes its myristointegration complex. The myristoylation signal and the NLS exert conflicting influences its subcellular localization. The key regulation of these motifs might be phosphorylation of a portion of MA molecules on the C-terminal tyrosine at the time of virus maturation, by virion-associated cellular tyrosine kinase. Implicated in the release from host cell mediated by Vpu. In terms of biological role, capsid protein p24 forms the conical core that encapsulates the genomic RNA-nucleocapsid complex in the virion. The core is constituted by capsid protein hexamer subunits. The core is disassembled soon after virion entry. Interaction with host PPIA/CYPA protects the virus from restriction by host TRIM5-alpha and from an unknown antiviral activity in host cells. This capsid restriction by TRIM5 is one of the factors which restricts SIV to the simian species. Nucleocapsid protein p7 encapsulates and protects viral dimeric unspliced (genomic) RNA. Binds these RNAs through its zinc fingers. Facilitates rearangement of nucleic acid secondary structure during retrotranscription of genomic RNA. This capability is referred to as nucleic acid chaperone activity. Its function is as follows. The aspartyl protease mediates proteolytic cleavages of Gag and Gag-Pol polyproteins during or shortly after the release of the virion from the plasma membrane. Cleavages take place as an ordered, step-wise cascade to yield mature proteins. This process is called maturation. Displays maximal activity during the budding process just prior to particle release from the cell. Also cleaves Nef and Vif, probably concomitantly with viral structural proteins on maturation of virus particles. Hydrolyzes host EIF4GI and PABP1 in order to shut off the capped cellular mRNA translation. The resulting inhibition of cellular protein synthesis serves to ensure maximal viral gene expression and to evade host immune response. Functionally, reverse transcriptase/ribonuclease H (RT) is a multifunctional enzyme that converts the viral dimeric RNA genome into dsDNA in the cytoplasm, shortly after virus entry into the cell. This enzyme displays a DNA polymerase activity that can copy either DNA or RNA templates, and a ribonuclease H (RNase H) activity that cleaves the RNA strand of RNA-DNA heteroduplexes in a partially processive 3' to 5' endonucleasic mode. Conversion of viral genomic RNA into dsDNA requires many steps. A tRNA binds to the primer-binding site (PBS) situated at the 5'-end of the viral RNA. RT uses the 3' end of the tRNA primer to perform a short round of RNA-dependent minus-strand DNA synthesis. The reading proceeds through the U5 region and ends after the repeated (R) region which is present at both ends of viral RNA. The portion of the RNA-DNA heteroduplex is digested by the RNase H, resulting in a ssDNA product attached to the tRNA primer. This ssDNA/tRNA hybridizes with the identical R region situated at the 3' end of viral RNA. This template exchange, known as minus-strand DNA strong stop transfer, can be either intra- or intermolecular. RT uses the 3' end of this newly synthesized short ssDNA to perform the RNA-dependent minus-strand DNA synthesis of the whole template. RNase H digests the RNA template except for two polypurine tracts (PPTs) situated at the 5'-end and near the center of the genome. It is not clear if both polymerase and RNase H activities are simultaneous. RNase H can probably proceed both in a polymerase-dependent (RNA cut into small fragments by the same RT performing DNA synthesis) and a polymerase-independent mode (cleavage of remaining RNA fragments by free RTs). Secondly, RT performs DNA-directed plus-strand DNA synthesis using the PPTs that have not been removed by RNase H as primers. PPTs and tRNA primers are then removed by RNase H. The 3' and 5' ssDNA PBS regions hybridize to form a circular dsDNA intermediate. Strand displacement synthesis by RT to the PBS and PPT ends produces a blunt ended, linear dsDNA copy of the viral genome that includes long terminal repeats (LTRs) at both ends. In terms of biological role, integrase catalyzes viral DNA integration into the host chromosome, by performing a series of DNA cutting and joining reactions. This enzyme activity takes place after virion entry into a cell and reverse transcription of the RNA genome in dsDNA. The first step in the integration process is 3' processing. This step requires a complex comprising the viral genome, matrix protein, Vpr and integrase. This complex is called the pre-integration complex (PIC). The integrase protein removes 2 nucleotides from each 3' end of the viral DNA, leaving recessed CA OH's at the 3' ends. In the second step, the PIC enters cell nucleus. This process is mediated through integrase and Vpr proteins, and allows the virus to infect a non dividing cell. This ability to enter the nucleus is specific of lentiviruses, other retroviruses cannot and rely on cell division to access cell chromosomes. In the third step, termed strand transfer, the integrase protein joins the previously processed 3' ends to the 5' ends of strands of target cellular DNA at the site of integration. The 5'-ends are produced by integrase-catalyzed staggered cuts, 5 bp apart. A Y-shaped, gapped, recombination intermediate results, with the 5'-ends of the viral DNA strands and the 3' ends of target DNA strands remaining unjoined, flanking a gap of 5 bp. The last step is viral DNA integration into host chromosome. This involves host DNA repair synthesis in which the 5 bp gaps between the unjoined strands are filled in and then ligated. Since this process occurs at both cuts flanking the SIV genome, a 5 bp duplication of host DNA is produced at the ends of SIV integration. Alternatively, Integrase may catalyze the excision of viral DNA just after strand transfer, this is termed disintegration. In Cercopithecidae (Old World monkeys), this protein is Gag-Pol polyprotein (gag-pol).